We begin with the raw amino-acid sequence, 186 residues long: Large ribosomal subunit protein uL10 (186 aa).

The protein belongs to the universal ribosomal protein uL10 family. In terms of assembly, part of the ribosomal stalk of the 50S ribosomal subunit. The N-terminus interacts with L11 and the large rRNA to form the base of the stalk. The C-terminus forms an elongated spine to which L12 dimers bind in a sequential fashion forming a multimeric L10(L12)X complex.

In terms of biological role, forms part of the ribosomal stalk, playing a central role in the interaction of the ribosome with GTP-bound translation factors. This is Large ribosomal subunit protein uL10 from Nitrosococcus oceani (strain ATCC 19707 / BCRC 17464 / JCM 30415 / NCIMB 11848 / C-107).